We begin with the raw amino-acid sequence, 273 residues long: Large ribosomal subunit protein uL2 (273 aa).

The interval Val228–Lys273 is disordered. Residues Lys254–Lys273 are compositionally biased toward basic residues.

The protein belongs to the universal ribosomal protein uL2 family. In terms of assembly, part of the 50S ribosomal subunit. Forms a bridge to the 30S subunit in the 70S ribosome.

Its function is as follows. One of the primary rRNA binding proteins. Required for association of the 30S and 50S subunits to form the 70S ribosome, for tRNA binding and peptide bond formation. It has been suggested to have peptidyltransferase activity; this is somewhat controversial. Makes several contacts with the 16S rRNA in the 70S ribosome. In Rickettsia prowazekii (strain Madrid E), this protein is Large ribosomal subunit protein uL2.